A 402-amino-acid chain; its full sequence is Zinc finger protein 322 (402 aa).

Residues 43–65 form a C2H2-type 1; atypical zinc finger; that stretch reads YQCLECKQNFCENLALIMCERTH. C2H2-type zinc fingers lie at residues 71 to 93, 99 to 121, 127 to 149, 155 to 177, 183 to 205, 211 to 233, 239 to 261, and 267 to 289; these read YKCDMCEKTFVQSSDLISHQRIH, YKCSKCEKSFWHHLALSGHQRTH, YTCDICGKNFGQSSDLLVHQRSH, YLCSECDKCFSRSTNLIRHRRTH, FKCLECEKAFSGKSDLISHQRTH, YKCNKCEKSYRHRSAFIVHKRVH, YKCGACEKCFGQKSDLIVHQRVH, and YKCLECMRSFTRSANLIRHQATH. A C2H2-type 10; degenerate zinc finger spans residues 293–315; it reads FKCLEYEKSFNCSSDLIVHQRIH. Residues 351–373 form a C2H2-type 11; degenerate zinc finger; the sequence is YKYTVCDKSFHQSSALLQHQTVH. Position 391 is a phosphoserine (Ser391).

It belongs to the krueppel C2H2-type zinc-finger protein family. As to quaternary structure, interacts with POU5F1.

It localises to the cytoplasm. The protein localises to the nucleus. Its function is as follows. Transcriptional activator. Important for maintenance of pluripotency in embryonic stem cells. Binds directly to the POU5F1 distal enhancer and the NANOG proximal promoter, and enhances expression of both genes. Can also bind to numerous other gene promoters and regulates expression of many other pluripotency factors, either directly or indirectly. Promotes inhibition of MAPK signaling during embryonic stem cell differentiation. This is Zinc finger protein 322 (ZNF322) from Macaca fascicularis (Crab-eating macaque).